Reading from the N-terminus, the 371-residue chain is Bifunctional enzyme IspD/IspF (371 aa).

Positions 1-212 (MKDITLVLLA…FDFTPASGTI (212 aa)) are 2-C-methyl-D-erythritol 4-phosphate cytidylyltransferase. The interval 213–371 (FTGNGFDVHA…NLGYFDWRKF (159 aa)) is 2-C-methyl-D-erythritol 2,4-cyclodiphosphate synthase. Positions 219 and 221 each coordinate a divalent metal cation. Residues 219 to 221 (DVH) and 245 to 246 (HS) contribute to the 4-CDP-2-C-methyl-D-erythritol 2-phosphate site. His-253 serves as a coordination point for a divalent metal cation. Residues 267–269 (DIG), 272–276 (FPDTD), 341–344 (STTE), Phe-348, and Arg-351 contribute to the 4-CDP-2-C-methyl-D-erythritol 2-phosphate site.

In the N-terminal section; belongs to the IspD/TarI cytidylyltransferase family. IspD subfamily. It in the C-terminal section; belongs to the IspF family. A divalent metal cation is required as a cofactor.

It catalyses the reaction 2-C-methyl-D-erythritol 4-phosphate + CTP + H(+) = 4-CDP-2-C-methyl-D-erythritol + diphosphate. It carries out the reaction 4-CDP-2-C-methyl-D-erythritol 2-phosphate = 2-C-methyl-D-erythritol 2,4-cyclic diphosphate + CMP. The protein operates within isoprenoid biosynthesis; isopentenyl diphosphate biosynthesis via DXP pathway; isopentenyl diphosphate from 1-deoxy-D-xylulose 5-phosphate: step 2/6. Its pathway is isoprenoid biosynthesis; isopentenyl diphosphate biosynthesis via DXP pathway; isopentenyl diphosphate from 1-deoxy-D-xylulose 5-phosphate: step 4/6. Functionally, bifunctional enzyme that catalyzes the formation of 4-diphosphocytidyl-2-C-methyl-D-erythritol from CTP and 2-C-methyl-D-erythritol 4-phosphate (MEP) (IspD), and catalyzes the conversion of 4-diphosphocytidyl-2-C-methyl-D-erythritol 2-phosphate (CDP-ME2P) to 2-C-methyl-D-erythritol 2,4-cyclodiphosphate (ME-CPP) with a corresponding release of cytidine 5-monophosphate (CMP) (IspF). The protein is Bifunctional enzyme IspD/IspF of Campylobacter hominis (strain ATCC BAA-381 / DSM 21671 / CCUG 45161 / LMG 19568 / NCTC 13146 / CH001A).